The sequence spans 323 residues: Acetylglutamate kinase (323 aa).

Substrate contacts are provided by residues 90-91, R112, and N218; that span reads GG.

It belongs to the acetylglutamate kinase family. ArgB subfamily.

The protein localises to the cytoplasm. The enzyme catalyses N-acetyl-L-glutamate + ATP = N-acetyl-L-glutamyl 5-phosphate + ADP. It participates in amino-acid biosynthesis; L-arginine biosynthesis; N(2)-acetyl-L-ornithine from L-glutamate: step 2/4. In terms of biological role, catalyzes the ATP-dependent phosphorylation of N-acetyl-L-glutamate. This is Acetylglutamate kinase from Ehrlichia canis (strain Jake).